Consider the following 507-residue polypeptide: UDP-N-acetylhexosamine pyrophosphorylase-like protein 1 (507 aa).

The short motif at 111–114 is the Substrate binding element; the sequence is LAGG. Residues 111-114, K125, Q199, and G225 each bind UTP; that span reads LAGG. N226 serves as a coordination point for substrate. UTP is bound at residue D256. A Substrate binding motif is present at residues 306-307; it reads EY. K380 provides a ligand contact to UTP. Residue K410 coordinates substrate.

It belongs to the UDPGP type 1 family.

The chain is UDP-N-acetylhexosamine pyrophosphorylase-like protein 1 (Uap1l1) from Mus musculus (Mouse).